The chain runs to 780 residues: Pendrin (780 aa).

The Cytoplasmic portion of the chain corresponds to 1–87; sequence MAAPGGRSEP…YRVKEWLLSD (87 aa). Residues 88 to 108 traverse the membrane as a helical segment; the sequence is VISGVSTGLVATLQGMAYALL. Residue A109 is a topological domain, extracellular. The chain crosses the membrane as a helical span at residues 110 to 130; sequence AVPVGYGLYSAFFPILTYFIF. Residues 131-135 are Cytoplasmic-facing; the sequence is GTSRH. The chain crosses the membrane as a helical span at residues 136-156; sequence ISVGPFPVVSLMVGSVVLSMA. Topologically, residues 157–191 are extracellular; the sequence is PDEHFLVSSSNGTVLNTTMIDTAARDTARVLIASA. Residues 192–212 traverse the membrane as a helical segment; that stretch reads LTLLVGIIQLIFGGLQIGFIV. Over 213–218 the chain is Cytoplasmic; it reads RYLADP. The chain crosses the membrane as a helical span at residues 219–239; the sequence is LVGGFTTAAAFQVLVSQLKIV. Residues 240-263 lie on the Extracellular side of the membrane; it reads LNVSTKNYNGVLSIIYTLVEIFQN. Residues 264 to 284 traverse the membrane as a helical segment; that stretch reads IGDTNLADFTAGLLTIVVCMA. Residues 285–295 are Cytoplasmic-facing; the sequence is VKELNDRFRHK. The helical transmembrane segment at 296-316 threads the bilayer; sequence IPVPIPIEVIVTIIATAISYG. At 317–344 the chain is on the extracellular side; it reads ANLEKNYNAGIVKSIPRGFLPPELPPVS. Residues 345-365 form a helical membrane-spanning segment; sequence LFSEMLAASFSIAVVAYAIAV. At 366 to 384 the chain is on the cytoplasmic side; that stretch reads SVGKVYATKYDYTIDGNQE. Residues 385 to 405 form a helical membrane-spanning segment; sequence FIAFGISNIFSGFFSCFVATT. Over 406-421 the chain is Extracellular; sequence ALSRTAVQESTGGKTQ. Residues 422–442 traverse the membrane as a helical segment; that stretch reads VAGIISAAIVMIAILALGKLL. Residues 443-448 are Cytoplasmic-facing; it reads EPLQKS. The helical transmembrane segment at 449–469 threads the bilayer; that stretch reads VLAAVVIANLKGMFMQLCDIP. The Extracellular portion of the chain corresponds to 470–486; that stretch reads RLWRQNKIDAVIWVFTC. A helical membrane pass occupies residues 487 to 507; sequence IVSIILGLDLGLLAGLIFGLL. The Cytoplasmic segment spans residues 508–780; it reads TVVLRVQFPS…QDEAMRTLAS (273 aa). The 195-residue stretch at 535-729 folds into the STAS domain; sequence NYKNIEEPQG…LTVHDAILYL (195 aa).

The protein belongs to the SLC26A/SulP transporter (TC 2.A.53) family. In terms of assembly, interacts with IQGAP1; this interaction enhances the chloride-bicarbonate exchange activity of SLC26A4. As to expression, highly expressed in the kidney (at protein level). High expression in adult thyroid, lower expression in adult and fetal kidney and fetal brain. Not expressed in other tissues.

It is found in the cell membrane. The protein localises to the apical cell membrane. The enzyme catalyses chloride(in) = chloride(out). The catalysed reaction is iodide(out) = iodide(in). It carries out the reaction hydrogencarbonate(in) + chloride(out) = hydrogencarbonate(out) + chloride(in). It catalyses the reaction iodide(in) + hydrogencarbonate(out) = iodide(out) + hydrogencarbonate(in). The enzyme catalyses iodide(in) + chloride(out) = iodide(out) + chloride(in). The catalysed reaction is formate(in) + chloride(out) = formate(out) + chloride(in). Its function is as follows. Sodium-independent transporter of chloride and iodide. Mediates electroneutral chloride-bicarbonate, chloride-iodide and chloride-formate exchange with 1:1 stoichiometry. Mediates electroneutral iodide-bicarbonate exchange. The chain is Pendrin (SLC26A4) from Homo sapiens (Human).